The sequence spans 364 residues: Pre-small/secreted glycoprotein (364 aa).

The first 32 residues, 1-32 (MGVTGILQLPRDRFKRTSFFLWVIILFQRTFS), serve as a signal peptide directing secretion. Residue N40 is glycosylated (N-linked (GlcNAc...) asparagine; by host). 2 cysteine pairs are disulfide-bonded: C108–C135 and C121–C147. 5 N-linked (GlcNAc...) asparagine; by host glycosylation sites follow: N204, N228, N238, N257, and N268.

It belongs to the filoviruses glycoprotein family. As to quaternary structure, homodimer; disulfide-linked. The homodimers are linked by two disulfide bonds in a parallel orientation. Monomer. In terms of processing, this precursor is processed into mature sGP and delta-peptide by host furin or furin-like proteases. The cleavage site corresponds to the furin optimal cleavage sequence [KR]-X-[KR]-R. Post-translationally, N-glycosylated. O-glycosylated.

It localises to the secreted. Functionally, seems to possess an anti-inflammatory activity as it can reverse the barrier-decreasing effects of TNF alpha. Might therefore contribute to the lack of inflammatory reaction seen during infection in spite the of extensive necrosis and massive virus production. Does not seem to be involved in activation of primary macrophages. Does not seem to interact specifically with neutrophils. In terms of biological role, viroporin that permeabilizes mammalian cell plasma membranes. It acts by altering permeation of ionic compounds and small molecules. This activity may lead to viral enterotoxic activity. The polypeptide is Pre-small/secreted glycoprotein (GP) (Zaire ebolavirus (strain Eckron-76) (ZEBOV)).